The chain runs to 112 residues: MAHCSTTAPFVDAMPASPQVTPAESEVVEIDEANDRPWVTVVWDDPVNLMHYVTYIFQKLFGYSKAKATELMMQVHSEGKAVVSSGSRDKVENDVRKLHAAGLWATMQHDGS.

It belongs to the ClpS family. In terms of assembly, binds to the N-terminal domain of the chaperone ClpA.

Involved in the modulation of the specificity of the ClpAP-mediated ATP-dependent protein degradation. The polypeptide is ATP-dependent Clp protease adapter protein ClpS (Rhodococcus jostii (strain RHA1)).